A 382-amino-acid chain; its full sequence is Dual-specificity RNA methyltransferase RlmN (382 aa).

The active-site Proton acceptor is Glu91. Residues 97 to 339 (EEDRGTLCIS…TTIRKTRGDD (243 aa)) enclose the Radical SAM core domain. A disulfide bridge links Cys104 with Cys344. 3 residues coordinate [4Fe-4S] cluster: Cys111, Cys115, and Cys118. S-adenosyl-L-methionine-binding positions include 165 to 166 (GE), Ser197, 219 to 221 (SLH), and Asn301. The active-site S-methylcysteine intermediate is Cys344.

It belongs to the radical SAM superfamily. RlmN family. It depends on [4Fe-4S] cluster as a cofactor.

It localises to the cytoplasm. The catalysed reaction is adenosine(2503) in 23S rRNA + 2 reduced [2Fe-2S]-[ferredoxin] + 2 S-adenosyl-L-methionine = 2-methyladenosine(2503) in 23S rRNA + 5'-deoxyadenosine + L-methionine + 2 oxidized [2Fe-2S]-[ferredoxin] + S-adenosyl-L-homocysteine. The enzyme catalyses adenosine(37) in tRNA + 2 reduced [2Fe-2S]-[ferredoxin] + 2 S-adenosyl-L-methionine = 2-methyladenosine(37) in tRNA + 5'-deoxyadenosine + L-methionine + 2 oxidized [2Fe-2S]-[ferredoxin] + S-adenosyl-L-homocysteine. Functionally, specifically methylates position 2 of adenine 2503 in 23S rRNA and position 2 of adenine 37 in tRNAs. m2A2503 modification seems to play a crucial role in the proofreading step occurring at the peptidyl transferase center and thus would serve to optimize ribosomal fidelity. The polypeptide is Dual-specificity RNA methyltransferase RlmN (Albidiferax ferrireducens (strain ATCC BAA-621 / DSM 15236 / T118) (Rhodoferax ferrireducens)).